Reading from the N-terminus, the 155-residue chain is SsrA-binding protein (155 aa).

The protein belongs to the SmpB family.

It localises to the cytoplasm. Its function is as follows. Required for rescue of stalled ribosomes mediated by trans-translation. Binds to transfer-messenger RNA (tmRNA), required for stable association of tmRNA with ribosomes. tmRNA and SmpB together mimic tRNA shape, replacing the anticodon stem-loop with SmpB. tmRNA is encoded by the ssrA gene; the 2 termini fold to resemble tRNA(Ala) and it encodes a 'tag peptide', a short internal open reading frame. During trans-translation Ala-aminoacylated tmRNA acts like a tRNA, entering the A-site of stalled ribosomes, displacing the stalled mRNA. The ribosome then switches to translate the ORF on the tmRNA; the nascent peptide is terminated with the 'tag peptide' encoded by the tmRNA and targeted for degradation. The ribosome is freed to recommence translation, which seems to be the essential function of trans-translation. The protein is SsrA-binding protein of Streptococcus uberis (strain ATCC BAA-854 / 0140J).